The following is a 290-amino-acid chain: Nucleoid occlusion protein (290 aa).

Positions 153-172 (EALAQRLGKGQSTVANKLRL) form a DNA-binding region, H-T-H motif.

The protein belongs to the ParB family.

The protein localises to the cytoplasm. It is found in the nucleoid. Functionally, effects nucleoid occlusion by binding relatively nonspecifically to DNA and preventing the assembly of the division machinery in the vicinity of the nucleoid, especially under conditions that disturb the cell cycle. It helps to coordinate cell division and chromosome segregation by preventing the formation of the Z ring through the nucleoid, which would cause chromosome breakage. This chain is Nucleoid occlusion protein, found in Bacillus mycoides (strain KBAB4) (Bacillus weihenstephanensis).